We begin with the raw amino-acid sequence, 213 residues long: Orotidine 5'-phosphate decarboxylase (213 aa).

Substrate contacts are provided by residues Asp9, Lys31, 59–68 (DFKVADIPAT), Ser115, 166–176 (PGVGAQGGKIE), Gly191, and Arg192. The active-site Proton donor is the Lys61.

This sequence belongs to the OMP decarboxylase family. Type 1 subfamily. As to quaternary structure, homodimer.

It catalyses the reaction orotidine 5'-phosphate + H(+) = UMP + CO2. Its pathway is pyrimidine metabolism; UMP biosynthesis via de novo pathway; UMP from orotate: step 2/2. In terms of biological role, catalyzes the decarboxylation of orotidine 5'-monophosphate (OMP) to uridine 5'-monophosphate (UMP). The sequence is that of Orotidine 5'-phosphate decarboxylase from Methanocaldococcus jannaschii (strain ATCC 43067 / DSM 2661 / JAL-1 / JCM 10045 / NBRC 100440) (Methanococcus jannaschii).